A 44-amino-acid chain; its full sequence is Antibacterial protein 2 homolog (44 aa).

The protein belongs to the staphylococcal hemolytic protein family.

It localises to the secreted. Its function is as follows. Has hemolytic activity and also inhibits the growth of gonococci. The sequence is that of Antibacterial protein 2 homolog from Staphylococcus haemolyticus (strain JCSC1435).